The following is a 225-amino-acid chain: NAD(P)H-quinone oxidoreductase subunit K, chloroplastic (225 aa).

4 residues coordinate [4Fe-4S] cluster: cysteine 43, cysteine 44, cysteine 108, and cysteine 139.

It belongs to the complex I 20 kDa subunit family. In terms of assembly, NDH is composed of at least 16 different subunits, 5 of which are encoded in the nucleus. It depends on [4Fe-4S] cluster as a cofactor.

The protein localises to the plastid. The protein resides in the chloroplast thylakoid membrane. The enzyme catalyses a plastoquinone + NADH + (n+1) H(+)(in) = a plastoquinol + NAD(+) + n H(+)(out). It catalyses the reaction a plastoquinone + NADPH + (n+1) H(+)(in) = a plastoquinol + NADP(+) + n H(+)(out). Its function is as follows. NDH shuttles electrons from NAD(P)H:plastoquinone, via FMN and iron-sulfur (Fe-S) centers, to quinones in the photosynthetic chain and possibly in a chloroplast respiratory chain. The immediate electron acceptor for the enzyme in this species is believed to be plastoquinone. Couples the redox reaction to proton translocation, and thus conserves the redox energy in a proton gradient. This chain is NAD(P)H-quinone oxidoreductase subunit K, chloroplastic, found in Daucus carota (Wild carrot).